A 156-amino-acid polypeptide reads, in one-letter code: Arginine repressor (156 aa).

Belongs to the ArgR family.

The protein resides in the cytoplasm. It participates in amino-acid biosynthesis; L-arginine biosynthesis [regulation]. Functionally, regulates arginine biosynthesis genes. The protein is Arginine repressor of Shigella boydii serotype 18 (strain CDC 3083-94 / BS512).